Reading from the N-terminus, the 708-residue chain is Metal-pseudopaline receptor CntO (708 aa).

The signal sequence occupies residues 1-21 (MRVSVSLVLGVGLGCSSPALW). One can recognise a TBDR plug domain in the interval 63–169 (RIEDIPQAIS…PGGTVNLVTK (107 aa)). Residues 174–708 (ERFARLHASA…NLTMSLTLNY (535 aa)) enclose the TBDR beta-barrel domain.

This sequence belongs to the TonB-dependent receptor family.

It localises to the cell outer membrane. Its function is as follows. Transports the metallophore pseudopaline, which is involved in the acquisition of nickel and zinc, and thus enables bacterial growth inside the host, where metal access is limited. Is probably involved in the import of pseudopaline-metal complexes. This Pseudomonas aeruginosa (strain ATCC 15692 / DSM 22644 / CIP 104116 / JCM 14847 / LMG 12228 / 1C / PRS 101 / PAO1) protein is Metal-pseudopaline receptor CntO.